We begin with the raw amino-acid sequence, 448 residues long: Protein chibby homolog 2 (448 aa).

Ser41, Ser86, Ser89, Ser97, Ser124, Ser144, Ser148, and Ser150 each carry phosphoserine. Residues 163-198 are a coiled coil; sequence AKEFVLQEENKSLREENKALREENRMLRKENKILQV. The tract at residues 206 to 226 is disordered; sequence SLGREESRPPSPLPQKDSASL. Residues Ser212 and Ser225 each carry the phosphoserine modification. Positions 242-267 form a coiled coil; sequence KEDSTLQLLREENRALQQLLEQKQAY. The tract at residues 270–321 is disordered; sequence QTEDAAAPAEESKPAPSPHEEPCSPGLLQDQGSGLSSHFEEPRGPPAPQEDS. Positions 279 to 291 are enriched in basic and acidic residues; sequence EESKPAPSPHEEP. Ser335 and Ser338 each carry phosphoserine. The stretch at 356 to 414 forms a coiled coil; sequence LQLLREMRQALQALLKENRLLQEENRTLQVLRAEHRGFQEENKALWENNKLKLQQKLVI.

The protein belongs to the chibby family. SPERT subfamily. As to quaternary structure, homodimer. Binds to NEK1.

The protein is Protein chibby homolog 2 (CBY2) of Macaca fascicularis (Crab-eating macaque).